A 351-amino-acid polypeptide reads, in one-letter code: Protein FAM118B (351 aa).

Ala-2 bears the N-acetylalanine mark. Residue Ser-9 is modified to Phosphoserine.

The protein belongs to the FAM118 family.

The protein localises to the nucleus. Its subcellular location is the cajal body. Its function is as follows. May play a role in Cajal bodies formation. The protein is Protein FAM118B (FAM118B) of Bos taurus (Bovine).